A 279-amino-acid polypeptide reads, in one-letter code: 4-diphosphocytidyl-2-C-methyl-D-erythritol kinase (279 aa).

Lys-9 is an active-site residue. Residue 92–102 coordinates ATP; sequence PLAAGLGGGSS. Residue Asp-134 is part of the active site.

The protein belongs to the GHMP kinase family. IspE subfamily.

The catalysed reaction is 4-CDP-2-C-methyl-D-erythritol + ATP = 4-CDP-2-C-methyl-D-erythritol 2-phosphate + ADP + H(+). The protein operates within isoprenoid biosynthesis; isopentenyl diphosphate biosynthesis via DXP pathway; isopentenyl diphosphate from 1-deoxy-D-xylulose 5-phosphate: step 3/6. In terms of biological role, catalyzes the phosphorylation of the position 2 hydroxy group of 4-diphosphocytidyl-2C-methyl-D-erythritol. The sequence is that of 4-diphosphocytidyl-2-C-methyl-D-erythritol kinase from Syntrophus aciditrophicus (strain SB).